The sequence spans 263 residues: 5'-nucleotidase SurE (263 aa).

Asp-15, Asp-16, Ser-46, and Asn-102 together coordinate a divalent metal cation.

This sequence belongs to the SurE nucleotidase family. The cofactor is a divalent metal cation.

It localises to the cytoplasm. It catalyses the reaction a ribonucleoside 5'-phosphate + H2O = a ribonucleoside + phosphate. In terms of biological role, nucleotidase that shows phosphatase activity on nucleoside 5'-monophosphates. The protein is 5'-nucleotidase SurE of Chlorobaculum tepidum (strain ATCC 49652 / DSM 12025 / NBRC 103806 / TLS) (Chlorobium tepidum).